A 612-amino-acid polypeptide reads, in one-letter code: MIVDNSKDFDLKSFLANLTTHSGVYRMLDKHGEIIYVGKAKNLKNRVNSYFSKGAKDSKTLMMVEQIARIEITITPSDYEAYLLENNLIKQHRPKYNILFKDDKSYPYLVISRDKFPRVSFYRGKSAYKKGQCFGPYVSISSVKNTLNTIQKIFPIRQCENSYYKSRVRPCLQYQIKRCLAPCVGLVSQQQYDEQLAILKKFLAGKFSTVLEEISAKMYQASEDMEYEKAQVYRDQLVVLRKLQQQQIVDIQEDKTFDVIGIYMQDSYASIALLQIQNGDVVADRHWSIDAKGQDKTSIMHAFLSHFYLGDEIRNIWPKNIILSKVEFADITDLMNSISQKIGQAINWIIAPAADNLKWLKLAEVNARQKLNIYTSSKSQYQKRLESLKEFLELEKDIKRIECFDISHFQGEATIASCVVYTDEGEDRKSHRRYNIKDIKAGDDYAAIYQAVSRRVSSGLEADNLPDVMIIDGGKGQIHQAEAVFREFGIQDKVQLVSLGKGVERISGKEKIYKGFDDTEYTLDEHNPGFLLLRQVRDSAHDHAIKGQRKKVSANRQSSIIEEIEGVGPKRRKALIMYFGGWQELSRASVDEIAKVKGISKKLAQEIWECFH.

Positions 20–98 (THSGVYRMLD…IKQHRPKYNI (79 aa)) constitute a GIY-YIG domain. A UVR domain is found at 208–243 (STVLEEISAKMYQASEDMEYEKAQVYRDQLVVLRKL).

Belongs to the UvrC family. Interacts with UvrB in an incision complex.

Its subcellular location is the cytoplasm. Functionally, the UvrABC repair system catalyzes the recognition and processing of DNA lesions. UvrC both incises the 5' and 3' sides of the lesion. The N-terminal half is responsible for the 3' incision and the C-terminal half is responsible for the 5' incision. The sequence is that of UvrABC system protein C from Francisella tularensis subsp. novicida (strain U112).